Reading from the N-terminus, the 448-residue chain is Deoxyguanosinetriphosphate triphosphohydrolase-like protein (448 aa).

Residues 67–260 (RLTHSLEVSQ…MELADDIAYG (194 aa)) form the HD domain.

The protein belongs to the dGTPase family. Type 2 subfamily.

The protein is Deoxyguanosinetriphosphate triphosphohydrolase-like protein of Aliivibrio salmonicida (strain LFI1238) (Vibrio salmonicida (strain LFI1238)).